The following is a 145-amino-acid chain: Mediator of RNA polymerase II transcription subunit 21 (145 aa).

Positions 79-112 (EESTAALQAASLRQLEEENQEAAARLEEVVYRGD) form a coiled coil.

The protein belongs to the Mediator complex subunit 21 family. In terms of assembly, component of the Mediator complex.

The protein resides in the nucleus. In terms of biological role, component of the Mediator complex, a coactivator involved in the regulated transcription of nearly all RNA polymerase II-dependent genes. Mediator functions as a bridge to convey information from gene-specific regulatory proteins to the basal RNA polymerase II transcription machinery. Mediator is recruited to promoters by direct interactions with regulatory proteins and serves as a scaffold for the assembly of a functional preinitiation complex with RNA polymerase II and the general transcription factors. The sequence is that of Mediator of RNA polymerase II transcription subunit 21 (med21) from Danio rerio (Zebrafish).